The following is a 111-amino-acid chain: MAVKIRLARGGAKKRPFYRVVIANATAPRDGDFLEKVGTYNPMLASDNSERVILKKDRIEYWLGTGAKPTERVAKFIEKAGVTLPKKVKKEMEVKAKNRKVRPSKKQSKES.

Belongs to the bacterial ribosomal protein bS16 family.

This Rickettsia prowazekii (strain Madrid E) protein is Small ribosomal subunit protein bS16.